Reading from the N-terminus, the 722-residue chain is Delta-like protein 1 (722 aa).

An N-terminal signal peptide occupies residues 1–17; that stretch reads MGRRSALALAVVSALLC. At 18 to 545 the chain is on the extracellular side; it reads QVWSSGVFEL…MESQGGPFPW (528 aa). The region spanning 176–220 is the DSL domain; it reads FVCDEHYYGEGCSVFCRPRDDAFGHFTCGDRGEKMCDPGWKGQYC. Intrachain disulfides connect Cys178/Cys187, Cys191/Cys203, Cys211/Cys220, Cys225/Cys236, Cys229/Cys242, Cys244/Cys253, Cys256/Cys267, Cys262/Cys273, Cys275/Cys284, Cys291/Cys303, Cys297/Cys313, Cys315/Cys324, Cys331/Cys342, Cys336/Cys351, Cys353/Cys362, Cys369/Cys380, Cys374/Cys390, Cys392/Cys401, Cys408/Cys419, Cys413/Cys428, Cys430/Cys439, Cys446/Cys457, Cys451/Cys466, Cys468/Cys477, Cys484/Cys495, Cys489/Cys504, and Cys506/Cys515. EGF-like domains lie at 225-253, 256-284, and 291-324; these read CLPG…GRYC, CIRY…GLFC, and CTHH…GANC. Residues 331–362 enclose the EGF-like 4; calcium-binding domain; sequence CAPSPCKNGASCTDLEDSFSCTCPPGFYGKVC. 2 EGF-like domains span residues 369-401 and 408-439; these read CADG…GFNC and CGSS…GRYC. In terms of domain architecture, EGF-like 7; calcium-binding spans 446–477; sequence CASSPCANGGTCRDSVNDFSCTCPPGYTGKNC. N-linked (GlcNAc...) asparagine glycosylation occurs at Asn476. In terms of domain architecture, EGF-like 8 spans 484 to 515; sequence CEHAPCHNGATCHQRGQRYMCECAQGYGGPNC. The helical transmembrane segment at 546-568 threads the bilayer; sequence VAVCAGVVLVLLLLLGCAAVVVC. Residues 569-722 lie on the Cytoplasmic side of the membrane; sequence VRLKLQKHQP…KDECVIATEV (154 aa). Lys613 participates in a covalent cross-link: Glycyl lysine isopeptide (Lys-Gly) (interchain with G-Cter in ubiquitin). The residue at position 638 (Thr638) is a Phosphothreonine. Over residues 655-664 the composition is skewed to basic and acidic residues; sequence RDTHSKRDTK. The segment at 655–697 is disordered; that stretch reads RDTHSKRDTKCQSQSSAGEEKIAPTLRGGEIPDRKRPESVYST. Ser693 is subject to Phosphoserine; by PKB. Ser696 is modified (phosphoserine). Residues 719-722 form an interaction with MAGI1 region; it reads ATEV.

In terms of assembly, homodimer. Interacts with TJP1. Interacts with MMP14; inhibits DLL1-induced Notch signaling. Interacts with MAGI1 (via PDZ domain); forms a complex with CTNNB1 and CDH2 and promotes recruitment to the adherens junction and stabilization on the cell surface. Interacts with PSEN1; undergoes a presenilin-dependent gamma-secretase cleavage that releases a Dll1-intracellular form. Interacts with MFAP5. Interacts with MIB1. Interacts with NEURL1B; leads to ubiquitination. Interacts with NEURL1. Interacts with SYNJ2BP; enhances DLL1 protein stability, and promotes Notch signaling in endothelial cells. Interacts with MAGI1, MAGI2, MAGI3 and MPDZ. Interacts (via ubiquitin) with EPN1 (via IUM domain); binding with NOTCH1 attached to neighboring cell, promotes ligand ubiquitination and EPN1 interaction, leading to NECD transendocytosis and Notch signaling. Interacts with NOTCH1. Ubiquitinated by MIB (MIB1 or MIB2), leading to its endocytosis and subsequent degradation. Ubiquitinated; promotes recycling back to the plasma membrane and confers a strong affinity for NOTCH1. Multi-ubiquitination of Lys-613 by MIB1 promotes both cis and trans-interaction with NOTCH1, as well as activation of Notch signaling. Ubiquitinated by NEURL1B. In terms of processing, phosphorylated in a membrane association-dependent manner. Phosphorylation at Ser-696 requires the presence of Ser-693, whereas phosphorylation at Thr-638 and Ser-693 occurs independently of the other sites. Phosphorylation is required for full ligand activity in vitro and affects surface presentation, ectodomain shedding, and endocytosis. Post-translationally, cleaved by MMP14; negatively regulates DLL1-induced Notch signaling in HPCs, modulating B-lymphocyte differentiation in bone marrow. Undergoes two consecutive processing events: a shedding event, partially by ADAM10, that generates a soluble extracellular form and an intracellular membrane-anchored form, followed by a gamma-secretase cleavage releasing an intracellular fragment. O-fucosylated. Can be elongated to a disaccharide by MFNG. In terms of tissue distribution, in the embryo, expressed in the paraxial mesoderm and nervous system. Expressed at high levels in adult heart and at lower levels, in adult lung. Highly expressed in satellite cells from masseter and tongue than in satellite cells from leg and extraocular muscle.?.

The protein resides in the apical cell membrane. Its subcellular location is the cell junction. The protein localises to the adherens junction. It localises to the membrane raft. It is found in the cell membrane. The protein resides in the nucleus. Transmembrane ligand protein of NOTCH1, NOTCH2 and NOTCH3 receptors that binds the extracellular domain (ECD) of Notch receptor in a cis and trans fashion manner. Following transinteraction, ligand cells produce mechanical force that depends of a clathrin-mediated endocytosis, requiring ligand ubiquitination, EPN1 interaction, and actin polymerisation; these events promote Notch receptor extracellular domain (NECD) transendocytosis and triggers Notch signaling through induction of cleavage, hyperphosphorylation, and nuclear accumulation of the intracellular domain of Notch receptors (NICD). Is required for embryonic development and maintenance of adult stem cells in many different tissues and immune systeme; the DLL1-induced Notch signaling is mediated through an intercellular communication that regulates cell lineage, cell specification, cell patterning and morphogenesis through effects on differentiation and proliferation. Plays a role in brain development at different level, namely by regulating neuronal differentiation of neural precursor cells via cell-cell interaction, most likely through the lateral inhibitory system in an endogenous level dependent-manner. During neocortex development, Dll1-Notch signaling transmission is mediated by dynamic interactions between intermediate neurogenic progenitors and radial glia; the cell-cell interactions are mediated via dynamic and transient elongation processes, likely to reactivate/maintain Notch activity in neighboring progenitors, and coordinate progenitor cell division and differentiation across radial and zonal boundaries. During cerebellar development, regulates Bergmann glial monolayer formation and its morphological maturation through a Notch signaling pathway. At the retina and spinal cord level, regulates neurogenesis by preventing the premature differentiation of neural progenitors and also by maintaining progenitors in spinal cord through Notch signaling pathway. Also controls neurogenesis of the neural tube in a progenitor domain-specific fashion along the dorsoventral axis. Maintains quiescence of neural stem cells and plays a role as a fate determinant that segregates asymmetrically to one daughter cell during neural stem cells mitosis, resulting in neuronal differentiation in Dll1-inheriting cell. Plays a role in immune systeme development, namely the development of all T-cells and marginal zone (MZ) B cells. Blocks the differentiation of progenitor cells into the B-cell lineage while promoting the emergence of a population of cells with the characteristics of a T-cell/NK-cell precursor. Upon MMP14 cleavage, negatively regulates Notch signaling in haematopoietic progenitor cells to specifically maintain normal B-cell development in bone marrow. Also plays a role during muscle development. During early development, inhibits myoblasts differentiation from the medial dermomyotomal lip and later regulates progenitor cell differentiation. Directly modulates cell adhesion and basal lamina formation in satellite cells through Notch signaling. Maintains myogenic progenitors pool by suppressing differentiation through down-regulation of MYOD1 and is required for satellite cell homing and PAX7 expression. During craniofacial and trunk myogenesis suppresses differentiation of cranial mesoderm-derived and somite-derived muscle via MYOD1 regulation but in cranial mesoderm-derived progenitors, is neither required for satellite cell homing nor for PAX7 expression. Also plays a role during pancreatic cell development. During type B pancreatic cell development, may be involved in the initiation of proximodistal patterning in the early pancreatic epithelium. Stimulates multipotent pancreatic progenitor cells proliferation and pancreatic growth by maintaining HES1 expression and PTF1A protein levels. During fetal stages of development, is required to maintain arterial identity and the responsiveness of arterial endothelial cells for VEGFA through regulation of KDR activation and NRP1 expression. Controls sprouting angiogenesis and subsequent vertical branch formation through regulation on tip cell differentiation. Negatively regulates goblet cell differentiation in intestine and controls secretory fat commitment through lateral inhibition in small intestine. Plays a role during inner ear development; negatively regulates auditory hair cell differentiation. Plays a role during nephron development through Notch signaling pathway. Regulates growth, blood pressure and energy homeostasis. The chain is Delta-like protein 1 (Dll1) from Mus musculus (Mouse).